Here is a 128-residue protein sequence, read N- to C-terminus: Ribonuclease P protein component (128 aa).

It belongs to the RnpA family. As to quaternary structure, consists of a catalytic RNA component (M1 or rnpB) and a protein subunit.

The enzyme catalyses Endonucleolytic cleavage of RNA, removing 5'-extranucleotides from tRNA precursor.. Its function is as follows. RNaseP catalyzes the removal of the 5'-leader sequence from pre-tRNA to produce the mature 5'-terminus. It can also cleave other RNA substrates such as 4.5S RNA. The protein component plays an auxiliary but essential role in vivo by binding to the 5'-leader sequence and broadening the substrate specificity of the ribozyme. The polypeptide is Ribonuclease P protein component (Prochlorococcus marinus (strain MIT 9303)).